The chain runs to 490 residues: Aspartyl/glutamyl-tRNA(Asn/Gln) amidotransferase subunit B (490 aa).

Belongs to the GatB/GatE family. GatB subfamily. As to quaternary structure, heterotrimer of A, B and C subunits.

It carries out the reaction L-glutamyl-tRNA(Gln) + L-glutamine + ATP + H2O = L-glutaminyl-tRNA(Gln) + L-glutamate + ADP + phosphate + H(+). The catalysed reaction is L-aspartyl-tRNA(Asn) + L-glutamine + ATP + H2O = L-asparaginyl-tRNA(Asn) + L-glutamate + ADP + phosphate + 2 H(+). In terms of biological role, allows the formation of correctly charged Asn-tRNA(Asn) or Gln-tRNA(Gln) through the transamidation of misacylated Asp-tRNA(Asn) or Glu-tRNA(Gln) in organisms which lack either or both of asparaginyl-tRNA or glutaminyl-tRNA synthetases. The reaction takes place in the presence of glutamine and ATP through an activated phospho-Asp-tRNA(Asn) or phospho-Glu-tRNA(Gln). The chain is Aspartyl/glutamyl-tRNA(Asn/Gln) amidotransferase subunit B from Burkholderia pseudomallei (strain K96243).